Reading from the N-terminus, the 177-residue chain is Phycoerythrin beta subunit (177 aa).

4 residues coordinate (2R,3E)-phycocyanobilin: tyrosine 18, lysine 28, asparagine 35, and aspartate 39. Positions 50, 54, and 61 each coordinate 15,16-dihydrobiliverdin. (2R,3E)-phycocyanobilin is bound by residues arginine 77, cysteine 82, arginine 84, and aspartate 85. The 15,16-dihydrobiliverdin site is built by arginine 129, glutamine 148, and lysine 149. 3 residues coordinate (2R,3E)-phycocyanobilin: proline 154, glycine 156, and cysteine 158.

The protein belongs to the phycobiliprotein family. As to quaternary structure, heterotetramer of 2 identical alpha chains and 2 identical beta chains which form 2 alpha-beta heterodimers within the heterotetramer. The two alpha-beta heterodimers are rotated to an open configuration in contrast to the closed configuration found in other cryptophyte species due to the insertion of a single amino acid, 'Asp-65', in a conserved region of the alpha chain. In the open form, the central chromophores are not in physical contact but are separated by a water-filled channel. Contains three phycocyanobilin chromophores and one 15,16-dihydrobiliverdin chromophore with binding of the phycocyanobilin chromophores mediated by both the alpha and beta subunits.

The protein localises to the plastid. The protein resides in the chloroplast thylakoid membrane. In terms of biological role, light-harvesting photosynthetic bile pigment-protein from the phycobiliprotein complex. The polypeptide is Phycoerythrin beta subunit (Hemiselmis virescens).